Consider the following 441-residue polypeptide: BTB/POZ domain-containing protein At3g05675 (441 aa).

The region spanning 20–98 (SDIVVRLRNE…LYVVSDDVHE (79 aa)) is the BTB domain.

The protein operates within protein modification; protein ubiquitination. In terms of biological role, may act as a substrate-specific adapter of an E3 ubiquitin-protein ligase complex (CUL3-RBX1-BTB) which mediates the ubiquitination and subsequent proteasomal degradation of target proteins. The sequence is that of BTB/POZ domain-containing protein At3g05675 from Arabidopsis thaliana (Mouse-ear cress).